The chain runs to 757 residues: E3 ubiquitin-protein ligase SMURF1 (757 aa).

In terms of domain architecture, C2 spans 1–120; it reads MSNPGTRRNG…TGYQRLDLCK (120 aa). Residues 193 to 237 form a disordered region; the sequence is GNCRFVESPSQDQRLQAQRLRNPDVRGSLQTPQNRPHGHQSPELP. Phosphoserine is present on serine 200. WW domains follow at residues 234-267 and 306-339; these read PELP…DPRI and GPLP…DPRL. Glycyl lysine isopeptide (Lys-Gly) (interchain with G-Cter in ubiquitin) cross-links involve residues lysine 381 and lysine 383. An HECT domain is found at 420-757; that stretch reads RPKDLKKRLM…VEETCGFAVE (338 aa). Catalysis depends on cysteine 725, which acts as the Glycyl thioester intermediate.

As to quaternary structure, interacts with TRAF4. Interacts (via HECT domain) with FBXL15 (via LRR repeats). Interacts with SMAD7 and TGFBR1; SMAD7 recruits SMURF1 to TGFBR1 and regulates TGF-beta receptor degradation. Interacts with MAVS; the interaction is mediated by NDFIP1. Auto-ubiquitinated in presence of NDFIP1. Ubiquitinated by the SCF(FBXL15) complex at Lys-381 and Lys-383, leading to its degradation by the proteasome. Lys-383 is the primary ubiquitination site. Expressed in melanocytes.

The protein localises to the cytoplasm. The protein resides in the cell membrane. It carries out the reaction S-ubiquitinyl-[E2 ubiquitin-conjugating enzyme]-L-cysteine + [acceptor protein]-L-lysine = [E2 ubiquitin-conjugating enzyme]-L-cysteine + N(6)-ubiquitinyl-[acceptor protein]-L-lysine.. The protein operates within protein modification; protein ubiquitination. In terms of biological role, E3 ubiquitin-protein ligase that acts as a negative regulator of BMP signaling pathway. Mediates ubiquitination and degradation of SMAD1 and SMAD5, 2 receptor-regulated SMADs specific for the BMP pathway. Promotes ubiquitination and subsequent proteasomal degradation of TRAF family members and RHOA. Promotes ubiquitination and subsequent proteasomal degradation of MAVS. Acts as an antagonist of TGF-beta signaling by ubiquitinating TGFBR1 and targeting it for degradation. Plays a role in dendrite formation by melanocytes. This chain is E3 ubiquitin-protein ligase SMURF1 (SMURF1), found in Homo sapiens (Human).